A 540-amino-acid polypeptide reads, in one-letter code: Glucose-6-phosphate isomerase (540 aa).

Residue E350 is the Proton donor of the active site. Active-site residues include H381 and K503.

It belongs to the GPI family.

Its subcellular location is the cytoplasm. It carries out the reaction alpha-D-glucose 6-phosphate = beta-D-fructose 6-phosphate. It participates in carbohydrate biosynthesis; gluconeogenesis. It functions in the pathway carbohydrate degradation; glycolysis; D-glyceraldehyde 3-phosphate and glycerone phosphate from D-glucose: step 2/4. Functionally, catalyzes the reversible isomerization of glucose-6-phosphate to fructose-6-phosphate. This chain is Glucose-6-phosphate isomerase, found in Burkholderia lata (strain ATCC 17760 / DSM 23089 / LMG 22485 / NCIMB 9086 / R18194 / 383).